A 107-amino-acid chain; its full sequence is Glutaredoxin 4 (107 aa).

A Glutaredoxin domain is found at leucine 4 to histidine 106. Lysine 21 is a binding site for glutathione. Residue cysteine 29 participates in [2Fe-2S] cluster binding. Residues arginine 58, phenylalanine 70, and cysteine 83 to aspartate 84 contribute to the glutathione site.

It belongs to the glutaredoxin family. Monothiol subfamily. Homodimer.

The protein resides in the cytoplasm. Its function is as follows. Monothiol glutaredoxin involved in the biogenesis of iron-sulfur clusters. In Haemophilus influenzae (strain ATCC 51907 / DSM 11121 / KW20 / Rd), this protein is Glutaredoxin 4 (grxD).